A 518-amino-acid polypeptide reads, in one-letter code: Protein nucleotidyltransferase YdiU (518 aa).

Residues G100, G102, R103, K123, D135, G136, R193, and R200 each coordinate ATP. D270 acts as the Proton acceptor in catalysis. Mg(2+) contacts are provided by N271 and D280. An ATP-binding site is contributed by D280.

It belongs to the SELO family. Mg(2+) is required as a cofactor. The cofactor is Mn(2+).

The enzyme catalyses L-seryl-[protein] + ATP = 3-O-(5'-adenylyl)-L-seryl-[protein] + diphosphate. It carries out the reaction L-threonyl-[protein] + ATP = 3-O-(5'-adenylyl)-L-threonyl-[protein] + diphosphate. The catalysed reaction is L-tyrosyl-[protein] + ATP = O-(5'-adenylyl)-L-tyrosyl-[protein] + diphosphate. It catalyses the reaction L-histidyl-[protein] + UTP = N(tele)-(5'-uridylyl)-L-histidyl-[protein] + diphosphate. The enzyme catalyses L-seryl-[protein] + UTP = O-(5'-uridylyl)-L-seryl-[protein] + diphosphate. It carries out the reaction L-tyrosyl-[protein] + UTP = O-(5'-uridylyl)-L-tyrosyl-[protein] + diphosphate. Functionally, nucleotidyltransferase involved in the post-translational modification of proteins. It can catalyze the addition of adenosine monophosphate (AMP) or uridine monophosphate (UMP) to a protein, resulting in modifications known as AMPylation and UMPylation. The polypeptide is Protein nucleotidyltransferase YdiU (Xanthomonas oryzae pv. oryzae (strain MAFF 311018)).